A 146-amino-acid chain; its full sequence is Snaclec agkicetin-C subunit beta (146 aa).

The signal sequence occupies residues 1–23; it reads MGRFIFVSFGLLVVFLSLSGTGA. 3 disulfides stabilise this stretch: C25–C36, C53–C142, and C119–C134. The C-type lectin domain maps to 32-143; it reads YEGNCYLVVK…CSRTQPFVCK (112 aa).

This sequence belongs to the snaclec family. In terms of assembly, heterodimer of subunits alpha and beta; disulfide-linked. In terms of tissue distribution, expressed by the venom gland.

The protein resides in the secreted. Functionally, is a potent glycoprotein Ibalpha (GP1BA) antagonist. Concentration-dependently inhibits botrocetin-, ristocetin- and low dose thrombin-induced platelet aggregation. Inhibits platelet adhesion only through inhibiting the vWF interaction with GP1BA, but has minimal effect on other platelet receptors, such as alpha-IIb/beta-3 (ITGA2B/ITGB3) or alpha-2/beta-1 (ITGA2/ITGB1). Causes an instant severe thrombocytopenia in rats and is not lethal to mice. In Deinagkistrodon acutus (Hundred-pace snake), this protein is Snaclec agkicetin-C subunit beta.